The following is an 843-amino-acid chain: Protein P (843 aa).

The tract at residues M1–Q177 is terminal protein domain (TP). Residues E178–L346 form a spacer region. 2 disordered regions span residues S202 to S221 and T285 to G310. Residues E347–Q690 are polymerase/reverse transcriptase domain (RT). Positions Q357–I600 constitute a Reverse transcriptase domain. 3 residues coordinate Mg(2+): D429, D551, and D552.

This sequence belongs to the hepadnaviridae P protein family.

The enzyme catalyses DNA(n) + a 2'-deoxyribonucleoside 5'-triphosphate = DNA(n+1) + diphosphate. It carries out the reaction Endonucleolytic cleavage to 5'-phosphomonoester.. With respect to regulation, activated by host HSP70 and HSP40 in vitro to be able to bind the epsilon loop of the pgRNA. Because deletion of the RNase H region renders the protein partly chaperone-independent, the chaperones may be needed indirectly to relieve occlusion of the RNA-binding site by this domain. Inhibited by several reverse-transcriptase inhibitors: Lamivudine, Adefovir and Entecavir. Functionally, multifunctional enzyme that converts the viral RNA genome into dsDNA in viral cytoplasmic capsids. This enzyme displays a DNA polymerase activity that can copy either DNA or RNA templates, and a ribonuclease H (RNase H) activity that cleaves the RNA strand of RNA-DNA heteroduplexes in a partially processive 3'- to 5'-endonucleasic mode. Neo-synthesized pregenomic RNA (pgRNA) are encapsidated together with the P protein, and reverse-transcribed inside the nucleocapsid. Initiation of reverse-transcription occurs first by binding the epsilon loop on the pgRNA genome, and is initiated by protein priming, thereby the 5'-end of (-)DNA is covalently linked to P protein. Partial (+)DNA is synthesized from the (-)DNA template and generates the relaxed circular DNA (RC-DNA) genome. After budding and infection, the RC-DNA migrates in the nucleus, and is converted into a plasmid-like covalently closed circular DNA (cccDNA). The activity of P protein does not seem to be necessary for cccDNA generation, and is presumably released from (+)DNA by host nuclear DNA repair machinery. The chain is Protein P from Hepatitis B virus genotype F1 (isolate Argentina/sa11/2000) (HBV-F).